A 437-amino-acid chain; its full sequence is UDP-glucosyl transferase 79L3 (437 aa).

H18 acts as the Proton acceptor in catalysis. D117 serves as the catalytic Charge relay. 6 residues coordinate UDP: S254, W312, V313, H330, S335, and E338.

Belongs to the UDP-glycosyltransferase family. Mainly expressed in flowers, flower buds and young leaves, and, to a lesser extent, in old leaves, stems and roots.

It functions in the pathway secondary metabolite biosynthesis; terpenoid biosynthesis. Functionally, component of the oleanane-type triterpene saponins (e.g. saponarioside A and saponarioside B) biosynthetic pathway, leading to the production of natural products with detergent properties used as traditional sources of soap. A glycosyltransferase that mediates the conversion of QA-triFR to QA-triFRX via the elongation of the C-28 sugar chain with a D-xylose. This Saponaria officinalis (Common soapwort) protein is UDP-glucosyl transferase 79L3.